The primary structure comprises 220 residues: MRLILLGAPGAGKGTQANFIKEKFGIPQISTGDMLRAAVKAGTPLGVEAKGYMDAGKLVPDALIIGLVKERLKEADCANGYLFDGFPRTIAQADAMKEAGVAIDYVLEIDVPFSEIIERMSGRRTHPASGRTYHVKFNPPKVEGKDDVTGEPLIQRDDDKEETVKKRLEVYEAQTKPLITYYGDWAKRGEENGLKAPQYRKISGLGTVEEIRERAFDALK.

10 to 15 (GAGKGT) provides a ligand contact to ATP. The NMP stretch occupies residues 30 to 59 (STGDMLRAAVKAGTPLGVEAKGYMDAGKLV). Residues Thr-31, Arg-36, 57 to 59 (KLV), 85 to 88 (GFPR), and Gln-92 each bind AMP. An LID region spans residues 122-159 (GRRTHPASGRTYHVKFNPPKVEGKDDVTGEPLIQRDDD). Residues Arg-123 and 132–133 (TY) each bind ATP. Residues Arg-156 and Arg-167 each coordinate AMP. Gly-206 lines the ATP pocket.

Belongs to the adenylate kinase family. In terms of assembly, monomer.

Its subcellular location is the cytoplasm. The catalysed reaction is AMP + ATP = 2 ADP. It participates in purine metabolism; AMP biosynthesis via salvage pathway; AMP from ADP: step 1/1. In terms of biological role, catalyzes the reversible transfer of the terminal phosphate group between ATP and AMP. Plays an important role in cellular energy homeostasis and in adenine nucleotide metabolism. This is Adenylate kinase from Burkholderia multivorans (strain ATCC 17616 / 249).